We begin with the raw amino-acid sequence, 303 residues long: Albumin b-32 (303 aa).

Residues 112 to 137 (ATPTSSATTPGGSASAAGTRTSSATR) show a composition bias toward low complexity. Residues 112–175 (ATPTSSATTP…GGGGADADAD (64 aa)) form a disordered region. The segment covering 146 to 156 (ARDDQGRQRPG) has biased composition (basic and acidic residues).

This sequence belongs to the ribosome-inactivating protein family. Type 1 RIP subfamily. As to quaternary structure, monomer. As to expression, endosperm.

The protein localises to the cytoplasm. The enzyme catalyses Endohydrolysis of the N-glycosidic bond at one specific adenosine on the 28S rRNA.. Functionally, a possible regulatory factor for the synthesis of zeins, the major group of storage proteins. This Zea mays (Maize) protein is Albumin b-32 (O6).